Reading from the N-terminus, the 194-residue chain is ATP synthase subunit b 1 (194 aa).

Residues 1–21 form a helical membrane-spanning segment; it reads MLLGTVVTVLSTLPAIAYAMD.

It belongs to the ATPase B chain family. In terms of assembly, F-type ATPases have 2 components, F(1) - the catalytic core - and F(0) - the membrane proton channel. F(1) has five subunits: alpha(3), beta(3), gamma(1), delta(1), epsilon(1). F(0) has three main subunits: a(1), b(2) and c(10-14). The alpha and beta chains form an alternating ring which encloses part of the gamma chain. F(1) is attached to F(0) by a central stalk formed by the gamma and epsilon chains, while a peripheral stalk is formed by the delta and b chains.

It localises to the cell inner membrane. In terms of biological role, f(1)F(0) ATP synthase produces ATP from ADP in the presence of a proton or sodium gradient. F-type ATPases consist of two structural domains, F(1) containing the extramembraneous catalytic core and F(0) containing the membrane proton channel, linked together by a central stalk and a peripheral stalk. During catalysis, ATP synthesis in the catalytic domain of F(1) is coupled via a rotary mechanism of the central stalk subunits to proton translocation. Component of the F(0) channel, it forms part of the peripheral stalk, linking F(1) to F(0). The chain is ATP synthase subunit b 1 from Granulibacter bethesdensis (strain ATCC BAA-1260 / CGDNIH1).